Consider the following 300-residue polypeptide: MSARIIDGKAAAARVLGQVRDDVHTLKAEGIEPALAVILVGNDPASEVYIRNKIVRAEEAGIRSLEHRLPADCSEARLLALIAELNTDRSVNGILLQLPLPAHINEAHALQAIAAAKDVDGFHSENVGGLSQGRNVLTPCTPSGCMHLLKETCGDLTGKHAVVIGRSNIVGKPMAALLLQAHCSVTVVHSRSTDAKALCQLADIVVAAVGRPRMIDAGWLKPGAVVIDVGINRIDDQGRSRLVGDVDFDNALDVVSAITPVPGGVGPMTIAFLMKNTVTAARQQAHAQRSQSEAVCLSIY.

NADP(+)-binding positions include 165–167 (GRS), S190, and I231.

This sequence belongs to the tetrahydrofolate dehydrogenase/cyclohydrolase family. Homodimer.

The catalysed reaction is (6R)-5,10-methylene-5,6,7,8-tetrahydrofolate + NADP(+) = (6R)-5,10-methenyltetrahydrofolate + NADPH. The enzyme catalyses (6R)-5,10-methenyltetrahydrofolate + H2O = (6R)-10-formyltetrahydrofolate + H(+). It participates in one-carbon metabolism; tetrahydrofolate interconversion. Functionally, catalyzes the oxidation of 5,10-methylenetetrahydrofolate to 5,10-methenyltetrahydrofolate and then the hydrolysis of 5,10-methenyltetrahydrofolate to 10-formyltetrahydrofolate. The polypeptide is Bifunctional protein FolD 2 (Pseudomonas syringae pv. tomato (strain ATCC BAA-871 / DC3000)).